Here is a 105-residue protein sequence, read N- to C-terminus: NADH-quinone oxidoreductase subunit K (105 aa).

The next 3 membrane-spanning stretches (helical) occupy residues 8–28 (VTNGLIFSTLLFVISVAGIII), 33–53 (ILILLMSIELMLLAVNTNFLI), and 65–85 (VFVFFIMAVAAAETAIGLAIV).

The protein belongs to the complex I subunit 4L family. In terms of assembly, NDH-1 is composed of 14 different subunits. Subunits NuoA, H, J, K, L, M, N constitute the membrane sector of the complex.

Its subcellular location is the cell inner membrane. It carries out the reaction a quinone + NADH + 5 H(+)(in) = a quinol + NAD(+) + 4 H(+)(out). In terms of biological role, NDH-1 shuttles electrons from NADH, via FMN and iron-sulfur (Fe-S) centers, to quinones in the respiratory chain. The immediate electron acceptor for the enzyme in this species is believed to be ubiquinone. Couples the redox reaction to proton translocation (for every two electrons transferred, four hydrogen ions are translocated across the cytoplasmic membrane), and thus conserves the redox energy in a proton gradient. The sequence is that of NADH-quinone oxidoreductase subunit K from Francisella philomiragia subsp. philomiragia (strain ATCC 25017 / CCUG 19701 / FSC 153 / O#319-036).